A 668-amino-acid polypeptide reads, in one-letter code: COBRA-like protein 11 (668 aa).

The signal sequence occupies residues 1 to 29; sequence MKKLRYVHLNLLLLLLPLINLQFPTLSLA. N-linked (GlcNAc...) asparagine glycosylation is found at Asn-69, Asn-125, Asn-254, Asn-318, Asn-329, Asn-358, Asn-412, Asn-432, Asn-473, Asn-552, Asn-560, and Asn-579. Residue Ser-636 is the site of GPI-anchor amidated serine attachment. The propeptide at 637 to 668 is removed in mature form; sequence SGMRLSGIRFLPSILLAITTFHAITDRLLTGV.

Belongs to the COBRA family. In terms of tissue distribution, mostly expressed in flowers, stamen, anthers and pollen, and, to a lower extent, possibly in roots, stems, leaves and siliques.

Its subcellular location is the cell membrane. Involved in the deposition of apical pectin cap and cellulose microfibrils in pollen tubes. Implicated in pollen tubes growth in the female transmitting tract of pistil and toward micropyles, via the perception of ovule guidance cues. This Arabidopsis thaliana (Mouse-ear cress) protein is COBRA-like protein 11.